Here is a 484-residue protein sequence, read N- to C-terminus: Sperm motility kinase 1 (484 aa).

The Protein kinase domain maps to 8–256 (YEMLETIGQG…VAEVMVHPWI (249 aa)). Residues 14 to 22 (IGQGGCAKV) and lysine 37 contribute to the ATP site. Aspartate 127 serves as the catalytic Proton acceptor. Residues 274-314 (KPDPAIVKPMGHIGFQAQDIEDSLRQRKFNETMASYCLLKK) enclose the UBA domain. The segment covering 423–434 (IDESTEGHTSAS) has biased composition (polar residues). A disordered region spans residues 423–447 (IDESTEGHTSASAEDKPVHSRGWPR).

It belongs to the protein kinase superfamily. Tyr protein kinase family. Smok subfamily. As to expression, testis-specific. Expressed in the testis from 22 days postpartum (22 dpp).

It catalyses the reaction L-seryl-[protein] + ATP = O-phospho-L-seryl-[protein] + ADP + H(+). The enzyme catalyses L-threonyl-[protein] + ATP = O-phospho-L-threonyl-[protein] + ADP + H(+). Functionally, may play a role in sperm motility, especially in the regulation of flagellar function. The protein is Sperm motility kinase 1 (Smok1) of Mus musculus (Mouse).